Consider the following 198-residue polypeptide: 7-methyl-GTP pyrophosphatase (198 aa).

Catalysis depends on Asp-72, which acts as the Proton acceptor.

It belongs to the Maf family. YceF subfamily. A divalent metal cation serves as cofactor.

The protein resides in the cytoplasm. It carries out the reaction N(7)-methyl-GTP + H2O = N(7)-methyl-GMP + diphosphate + H(+). Its function is as follows. Nucleoside triphosphate pyrophosphatase that hydrolyzes 7-methyl-GTP (m(7)GTP). May have a dual role in cell division arrest and in preventing the incorporation of modified nucleotides into cellular nucleic acids. This chain is 7-methyl-GTP pyrophosphatase, found in Idiomarina loihiensis (strain ATCC BAA-735 / DSM 15497 / L2-TR).